The primary structure comprises 147 residues: Hemoglobin subunit beta (147 aa).

Residue Val-2 is modified to N-acetylvaline. The 145-residue stretch at 3–147 folds into the Globin domain; sequence HLTGEEKAAV…VANALAHKYH (145 aa). Residue Thr-13 is modified to Phosphothreonine. The residue at position 45 (Ser-45) is a Phosphoserine. Position 60 is an N6-acetyllysine (Lys-60). Position 64 (His-64) interacts with heme b. Lys-83 is subject to N6-acetyllysine. His-93 contacts heme b. Position 94 is an S-nitrosocysteine (Cys-94). Position 145 is an N6-acetyllysine (Lys-145).

Belongs to the globin family. Heterotetramer of two alpha chains and two beta chains. As to expression, red blood cells.

In terms of biological role, involved in oxygen transport from the lung to the various peripheral tissues. This chain is Hemoglobin subunit beta (HBB), found in Aotus azarae (Azara's night monkey).